The chain runs to 457 residues: tRNA modification GTPase MnmE (457 aa).

(6S)-5-formyl-5,6,7,8-tetrahydrofolate-binding residues include Arg-25, Glu-87, and Arg-126. Positions 223–377 constitute a TrmE-type G domain; the sequence is GIATAIIGRP…IEEKINQLFF (155 aa). A K(+)-binding site is contributed by Asn-233. Residues 233-238, 252-258, and 277-280 each bind GTP; these read NVGKSS, TDIAGTT, and DTAG. Ser-237 is a Mg(2+) binding site. K(+)-binding residues include Thr-252, Ile-254, and Thr-257. Thr-258 contacts Mg(2+). Residue Lys-457 coordinates (6S)-5-formyl-5,6,7,8-tetrahydrofolate.

It belongs to the TRAFAC class TrmE-Era-EngA-EngB-Septin-like GTPase superfamily. TrmE GTPase family. Homodimer. Heterotetramer of two MnmE and two MnmG subunits. K(+) is required as a cofactor.

The protein resides in the cytoplasm. Functionally, exhibits a very high intrinsic GTPase hydrolysis rate. Involved in the addition of a carboxymethylaminomethyl (cmnm) group at the wobble position (U34) of certain tRNAs, forming tRNA-cmnm(5)s(2)U34. The sequence is that of tRNA modification GTPase MnmE from Streptococcus suis (strain 98HAH33).